We begin with the raw amino-acid sequence, 516 residues long: Delta(24)-sterol reductase (516 aa).

The first 22 residues, 1-22 (MEPAVSLAVCALLFLLWVRVKG), serve as a signal peptide directing secretion. Residues 23-31 (LEFVLIHQR) are Lumenal-facing. Residues 32–52 (WVFVCLFLLPLSLIFDIYYYV) form a helical membrane-spanning segment. Residues 53-516 (RAWVVFKLSS…YDKICKAARH (464 aa)) are Cytoplasmic-facing. Residues 58 to 234 (FKLSSAPRLH…VAAEIRIIPA (177 aa)) form the FAD-binding PCMH-type domain. 163-175 (TVGGLIMGTGIES) is an FAD binding site.

This sequence belongs to the FAD-binding oxidoreductase/transferase type 4 family. Interacts with DHCR7; this interaction regulates DHCR7 activity. FAD is required as a cofactor.

The protein resides in the endoplasmic reticulum membrane. It is found in the golgi apparatus membrane. It carries out the reaction cholesterol + NADP(+) = desmosterol + NADPH + H(+). The catalysed reaction is lanosterol + NADPH + H(+) = 24,25-dihydrolanosterol + NADP(+). It catalyses the reaction 5alpha-cholest-8-en-3beta-ol + NADP(+) = zymosterol + NADPH + H(+). It functions in the pathway steroid biosynthesis; cholesterol biosynthesis. Its function is as follows. Catalyzes the reduction of the delta-24 double bond of sterol intermediates during cholesterol biosynthesis. In addition to its cholesterol-synthesizing activity, can protect cells from oxidative stress by reducing caspase 3 activity during apoptosis induced by oxidative stress. Also protects against amyloid-beta peptide-induced apoptosis. This Macaca fascicularis (Crab-eating macaque) protein is Delta(24)-sterol reductase (DHCR24).